A 313-amino-acid chain; its full sequence is tRNA dimethylallyltransferase (313 aa).

17 to 24 serves as a coordination point for ATP; sequence GPTASGKT. Residue 19-24 participates in substrate binding; it reads TASGKT. Interaction with substrate tRNA stretches follow at residues 42-45, 166-170, 247-252, and 280-287; these read DSAL, QRLSR, RCVGYR, and KRQITWLR.

This sequence belongs to the IPP transferase family. As to quaternary structure, monomer. Requires Mg(2+) as cofactor.

The enzyme catalyses adenosine(37) in tRNA + dimethylallyl diphosphate = N(6)-dimethylallyladenosine(37) in tRNA + diphosphate. Catalyzes the transfer of a dimethylallyl group onto the adenine at position 37 in tRNAs that read codons beginning with uridine, leading to the formation of N6-(dimethylallyl)adenosine (i(6)A). The chain is tRNA dimethylallyltransferase from Photorhabdus laumondii subsp. laumondii (strain DSM 15139 / CIP 105565 / TT01) (Photorhabdus luminescens subsp. laumondii).